We begin with the raw amino-acid sequence, 448 residues long: Phosphoglucosamine mutase (448 aa).

The Phosphoserine intermediate role is filled by Ser-100. Residues Ser-100, Asp-240, Asp-242, and Asp-244 each coordinate Mg(2+). Ser-100 is subject to Phosphoserine.

It belongs to the phosphohexose mutase family. Mg(2+) is required as a cofactor. Post-translationally, activated by phosphorylation.

The enzyme catalyses alpha-D-glucosamine 1-phosphate = D-glucosamine 6-phosphate. Its function is as follows. Catalyzes the conversion of glucosamine-6-phosphate to glucosamine-1-phosphate. This is Phosphoglucosamine mutase from Clostridium perfringens (strain ATCC 13124 / DSM 756 / JCM 1290 / NCIMB 6125 / NCTC 8237 / Type A).